The following is a 264-amino-acid chain: ATP synthase subunit a (264 aa).

6 helical membrane passes run 29 to 49 (TWHI…LWIF), 87 to 107 (NALI…MNFM), 134 to 154 (DVNI…YYSI), 177 to 197 (IPVN…SLAL), 208 to 228 (LIFI…SLGV), and 235 to 255 (LIFH…LTIV).

The protein belongs to the ATPase A chain family. F-type ATPases have 2 components, CF(1) - the catalytic core - and CF(0) - the membrane proton channel. CF(1) has five subunits: alpha(3), beta(3), gamma(1), delta(1), epsilon(1). CF(0) has three main subunits: a(1), b(2) and c(9-12). The alpha and beta chains form an alternating ring which encloses part of the gamma chain. CF(1) is attached to CF(0) by a central stalk formed by the gamma and epsilon chains, while a peripheral stalk is formed by the delta and b chains.

Its subcellular location is the cell inner membrane. Functionally, key component of the proton channel; it plays a direct role in the translocation of protons across the membrane. This Shewanella sp. (strain ANA-3) protein is ATP synthase subunit a.